The chain runs to 284 residues: MKQKVVNIGDIKVANDLPFVLFGGMNVLESRDLAMRICEHYVTVTQKLGIPYVFKASFDKANRSSIHSYRGPGLEEGMKIFQELKQTFGVKVITDVHEASQVQPVADVVDVIQLPAFLARQTDLVEAMAKTGAVINVKKPQFVSPGQMGNIVDKFHEGGNDKVILCDRGANFGYDNLVVDMLGFSVMKKVSGNSPVIFDVTHALQCRDPFGAASGGRRGQVTELARAGMAVGLAGLFLESHPDPANAKCDGPSALPLAKLEQFLTQIKAIDDLVKSFDELDTEN.

This sequence belongs to the KdsA family.

It localises to the cytoplasm. It catalyses the reaction D-arabinose 5-phosphate + phosphoenolpyruvate + H2O = 3-deoxy-alpha-D-manno-2-octulosonate-8-phosphate + phosphate. Its pathway is carbohydrate biosynthesis; 3-deoxy-D-manno-octulosonate biosynthesis; 3-deoxy-D-manno-octulosonate from D-ribulose 5-phosphate: step 2/3. The protein operates within bacterial outer membrane biogenesis; lipopolysaccharide biosynthesis. The chain is 2-dehydro-3-deoxyphosphooctonate aldolase from Salmonella paratyphi A (strain ATCC 9150 / SARB42).